A 302-amino-acid polypeptide reads, in one-letter code: Ribonuclease HII (302 aa).

The RNase H type-2 domain maps to 53 to 297 (EFEIGVDEVG…VQQAIEGTLA (245 aa)). The a divalent metal cation site is built by Asp-59, Glu-60, and Asp-163.

Belongs to the RNase HII family. The cofactor is Mn(2+). It depends on Mg(2+) as a cofactor.

The protein localises to the cytoplasm. It catalyses the reaction Endonucleolytic cleavage to 5'-phosphomonoester.. Functionally, endonuclease that specifically degrades the RNA of RNA-DNA hybrids. The protein is Ribonuclease HII of Psychrobacter sp. (strain PRwf-1).